The chain runs to 347 residues: Heat-inducible transcription repressor HrcA (347 aa).

It belongs to the HrcA family.

Functionally, negative regulator of class I heat shock genes (grpE-dnaK-dnaJ and groELS operons). Prevents heat-shock induction of these operons. In Sorangium cellulosum (strain So ce56) (Polyangium cellulosum (strain So ce56)), this protein is Heat-inducible transcription repressor HrcA.